Consider the following 284-residue polypeptide: 2-dehydro-3-deoxyphosphooctonate aldolase (284 aa).

It belongs to the KdsA family.

It is found in the cytoplasm. The enzyme catalyses D-arabinose 5-phosphate + phosphoenolpyruvate + H2O = 3-deoxy-alpha-D-manno-2-octulosonate-8-phosphate + phosphate. Its pathway is carbohydrate biosynthesis; 3-deoxy-D-manno-octulosonate biosynthesis; 3-deoxy-D-manno-octulosonate from D-ribulose 5-phosphate: step 2/3. The protein operates within bacterial outer membrane biogenesis; lipopolysaccharide biosynthesis. The polypeptide is 2-dehydro-3-deoxyphosphooctonate aldolase (Escherichia coli O157:H7).